Consider the following 1740-residue polypeptide: SH3 and multiple ankyrin repeat domains protein 3 (1740 aa).

The interval 1-75 (MDGPGASAVV…KFLDEERLLQ (75 aa)) is intramolecular interaction with the ANK repeats. Y122 carries the phosphotyrosine modification. 6 ANK repeats span residues 148-181 (SGEC…FRTR), 182-214 (DGLT…YKDS), 215-245 (RGLT…QLGT), 249-278 (NGWQ…NMGA), 282-311 (SGNT…NKDV), and 315-345 (NSQT…DVVP). The tract at residues 354–466 (KRRRLAGPSG…PPPRGPKRKL (113 aa)) is disordered. A phosphoserine mark is found at S373, S375, S387, and S394. Over residues 404–415 (LQEEKDRDRDGE) the composition is skewed to basic and acidic residues. The span at 444–460 (APGPGPASPAPPAPPPR) shows a compositional bias: pro residues. Residues 470–529 (VPGRKFIAVKAHSPQGEGEIPLHRGEAVKVLSIGEGGFWEGTVKGRTGWFPADCVEEVQM) form the SH3 domain. S482 bears the Phosphoserine mark. Residue Y555 is modified to Phosphotyrosine. Residues 570 to 664 (VAILQKRDHE…RLVMKVVSVT (95 aa)) form the PDZ domain. The interval 664 to 687 (TRKPEEDSARRRAPPPPKRAPSTT) is disordered. The tract at residues 677-684 (PPPPKRAP) is required for interaction with ABI1. A phosphoserine mark is found at S694, S781, S790, and S801. Disordered regions lie at residues 759-855 (RQGL…RSSF), 868-1053 (AGLY…QPSR), 1115-1199 (AARE…MILS), 1211-1463 (LIVV…GPAR), and 1476-1518 (GDPV…EPVG). Residues 812 to 845 (IPPPPQTAPPPPPAPYYFDSGPPPTFSPPPPPPG) are compositionally biased toward pro residues. A phosphoserine mark is found at S891 and S898. T913 is modified (phosphothreonine). Position 931 is a phosphotyrosine (Y931). R966 bears the Asymmetric dimethylarginine mark. Positions 1017–1027 (VKERRLEERRR) are enriched in basic and acidic residues. Over residues 1123-1132 (SQTPSRSPTP) the composition is skewed to polar residues. T1131 is subject to Phosphothreonine. Phosphoserine occurs at positions 1135, 1160, 1164, and 1167. The span at 1175–1195 (ARREAEKPTREERKSPEDKKS) shows a compositional bias: basic and acidic residues. The residue at position 1235 (T1235) is a Phosphothreonine. Composition is skewed to pro residues over residues 1252–1262 (MPSPRAQPPGS) and 1322–1334 (TPPP…PTTV). S1254 is modified (phosphoserine). A compositionally biased stretch (low complexity) spans 1335–1344 (PSPASGKPSS). Over residues 1361–1371 (ADTRSSSDPHL) the composition is skewed to basic and acidic residues. Low complexity predominate over residues 1372-1393 (ETTSTISTVSSMSTLSSESGEL). An SH3-binding motif is present at residues 1411-1417 (PPVPPKP). S1421 bears the Phosphoserine mark. A coiled-coil region spans residues 1495-1515 (ISELSSRLQQLNKDTRSLGEE). The span at 1496–1506 (SELSSRLQQLN) shows a compositional bias: polar residues. 4 positions are modified to phosphoserine: S1511, S1522, S1530, and S1549. Disordered regions lie at residues 1556-1594 (ISAQ…PASL) and 1637-1673 (VRSV…QQKP). The span at 1637 to 1647 (VRSVSARSRSP) shows a compositional bias: low complexity. Residues S1644, S1646, and S1648 each carry the phosphoserine modification. Over residues 1648-1658 (SPSPLPSPSPG) the composition is skewed to pro residues. The segment covering 1659-1668 (SGPSAGPRRP) has biased composition (low complexity). The SAM domain occupies 1677-1740 (WSKFDVGDWL…ERALRQLDGS (64 aa)).

Belongs to the SHANK family. In terms of assembly, may homomultimerize via its SAM domain. Interacts with BAIAP2, DBNL and SLC17A7/VGLUT1. Interacts with DLGAP1/GKAP, GRM1/MGLUR1, GRM5/MGLUR5 and LZTS3 C-termini via its PDZ domain. Interacts with ABI1, HOMER1, HOMER2, HOMER3 and CTTN/cortactin SH3 domain. Is part of a complex with DLG4/PSD-95 and DLGAP1/GKAP. Interacts (via PDZ domain) with the GRIA1 subunit of the AMPA receptor (via PDZ-binding motif). Interacts with WASF1 and CYFIP2; the interactions mediate the association of SHANK3 with the WAVE1 complex. Interacts with ARPC2; the interaction probably mediates the association of SHANK3 with the Arp2/3 complex. Interacts (via ANK repeats) with SHARPIN and SPTAN1. Interacts (via PDZ domain) with ARHGAP44 (probably via PDZ-binding motif); the interaction takes place in dendritic spines and promotes GRIA1 exocytosis. Interacts with CAMK2A. Interacts with DIP2A. Interacts with ADGRL3. Widely expressed in brain (at protein level).

The protein localises to the cytoplasm. It is found in the postsynaptic density. It localises to the cell projection. Its subcellular location is the dendritic spine. Major scaffold postsynaptic density protein which interacts with multiple proteins and complexes to orchestrate the dendritic spine and synapse formation, maturation and maintenance. Interconnects receptors of the postsynaptic membrane including NMDA-type and metabotropic glutamate receptors via complexes with GKAP/PSD-95 and HOMER, respectively, and the actin-based cytoskeleton. Plays a role in the structural and functional organization of the dendritic spine and synaptic junction through the interaction with Arp2/3 and WAVE1 complex as well as the promotion of the F-actin clusters. By way of this control of actin dynamics, participates in the regulation of developing neurons growth cone motility and the NMDA receptor-signaling. Also modulates GRIA1 exocytosis and GRM5/MGLUR5 expression and signaling to control the AMPA and metabotropic glutamate receptor-mediated synaptic transmission and plasticity. May be required at an early stage of synapse formation and be inhibited by IGF1 to promote synapse maturation. The sequence is that of SH3 and multiple ankyrin repeat domains protein 3 (Shank3) from Rattus norvegicus (Rat).